We begin with the raw amino-acid sequence, 270 residues long: Phosphatidylglycerol--prolipoprotein diacylglyceryl transferase (270 aa).

The next 4 helical transmembrane spans lie at 19-39 (FPVYWYGIIIGTGVLLGLWLA), 56-76 (LVLIAVPIAILFARMYYVIFE), 92-112 (QGGLAIHGGLIGAVVTGILFA), and 116-136 (GVSFWKLADIAAPSILLGQAI). Arg138 is a binding site for a 1,2-diacyl-sn-glycero-3-phospho-(1'-sn-glycerol). 3 consecutive transmembrane segments (helical) span residues 178–198 (HPTFLYESLWNFAGVILLLAL), 206–226 (GELFFTYLIWYSIGRFFVEGL), and 236–256 (LRIAQVMSIGLVVISIIFIIV).

This sequence belongs to the Lgt family.

It localises to the cell membrane. It carries out the reaction L-cysteinyl-[prolipoprotein] + a 1,2-diacyl-sn-glycero-3-phospho-(1'-sn-glycerol) = an S-1,2-diacyl-sn-glyceryl-L-cysteinyl-[prolipoprotein] + sn-glycerol 1-phosphate + H(+). It participates in protein modification; lipoprotein biosynthesis (diacylglyceryl transfer). Its function is as follows. Catalyzes the transfer of the diacylglyceryl group from phosphatidylglycerol to the sulfhydryl group of the N-terminal cysteine of a prolipoprotein, the first step in the formation of mature lipoproteins. The sequence is that of Phosphatidylglycerol--prolipoprotein diacylglyceryl transferase from Bacillus anthracis (strain A0248).